Here is a 360-residue protein sequence, read N- to C-terminus: Threonine synthase (360 aa).

Lysine 69 bears the N6-(pyridoxal phosphate)lysine mark. Residues asparagine 95, 196-200 (GNAGN), and threonine 326 each bind pyridoxal 5'-phosphate.

It belongs to the threonine synthase family. Homodimer. Pyridoxal 5'-phosphate is required as a cofactor.

The enzyme catalyses O-phospho-L-homoserine + H2O = L-threonine + phosphate. Its pathway is amino-acid biosynthesis; L-threonine biosynthesis; L-threonine from L-aspartate: step 5/5. Catalyzes the gamma-elimination of phosphate from L-phosphohomoserine and the beta-addition of water to produce L-threonine. This Mycobacterium leprae (strain TN) protein is Threonine synthase (thrC).